The following is a 391-amino-acid chain: Sister chromatid cohesion protein DCC1 (391 aa).

Belongs to the DCC1 family. In terms of assembly, component of the ctf18-RFC complex which consists of ctf18, ctf8, dscc1 and the RFC complex.

The protein resides in the nucleus. Functionally, loads pcna onto primed templates regulating velocity, spacing and restart activity of replication forks. May couple DNA replication to sister chromatid cohesion. The chain is Sister chromatid cohesion protein DCC1 (dscc1) from Xenopus tropicalis (Western clawed frog).